Here is a 158-residue protein sequence, read N- to C-terminus: Transcription elongation factor GreA (158 aa).

It belongs to the GreA/GreB family.

In terms of biological role, necessary for efficient RNA polymerase transcription elongation past template-encoded arresting sites. The arresting sites in DNA have the property of trapping a certain fraction of elongating RNA polymerases that pass through, resulting in locked ternary complexes. Cleavage of the nascent transcript by cleavage factors such as GreA or GreB allows the resumption of elongation from the new 3'terminus. GreA releases sequences of 2 to 3 nucleotides. In Psychrobacter sp. (strain PRwf-1), this protein is Transcription elongation factor GreA.